A 201-amino-acid polypeptide reads, in one-letter code: Adenylyl-sulfate kinase (201 aa).

35-42 is an ATP binding site; it reads GLSGSGKS. S109 (phosphoserine intermediate) is an active-site residue.

Belongs to the APS kinase family.

The catalysed reaction is adenosine 5'-phosphosulfate + ATP = 3'-phosphoadenylyl sulfate + ADP + H(+). It functions in the pathway sulfur metabolism; hydrogen sulfide biosynthesis; sulfite from sulfate: step 2/3. In terms of biological role, catalyzes the synthesis of activated sulfate. This is Adenylyl-sulfate kinase from Enterobacter sp. (strain 638).